The sequence spans 340 residues: MSEKNAYAKSGVDVEAGYEVVERIKKHVARTERAGVMGVLGGFGGMFDLSKTGVKEPVLVSGTDGVGTKLMLAIKYDKHDTIGQDCVAMCVNDIIAAGAEPLYFLDYIATGKNNPVKLEEVVSGVAEGCVQAGVALIGGETAEMPGMYGEDDYDLAGFAVGVAEKSQIIDGSKVKEGDILLGLASSGIHSNGYSLVRRVFADYTGKELLPELEGKQLKDVLLEPTRIYVKAALPLIKEELVNGIGHITGGGFIENVPRMFADDLAAEIDEDKVPVLPIFKALEKYGDIKHEEMFEIFNMGVGLMLAVSPENVNRVKELLDEPVYEIGRIIKKADASVVIK.

This sequence belongs to the AIR synthase family.

It localises to the cytoplasm. The enzyme catalyses 2-formamido-N(1)-(5-O-phospho-beta-D-ribosyl)acetamidine + ATP = 5-amino-1-(5-phospho-beta-D-ribosyl)imidazole + ADP + phosphate + H(+). Its pathway is purine metabolism; IMP biosynthesis via de novo pathway; 5-amino-1-(5-phospho-D-ribosyl)imidazole from N(2)-formyl-N(1)-(5-phospho-D-ribosyl)glycinamide: step 2/2. The chain is Phosphoribosylformylglycinamidine cyclo-ligase from Streptococcus pyogenes serotype M3 (strain ATCC BAA-595 / MGAS315).